Here is a 488-residue protein sequence, read N- to C-terminus: Ribulose bisphosphate carboxylase large chain (488 aa).

Substrate is bound by residues Asn-128 and Thr-178. The active-site Proton acceptor is Lys-180. Residue Lys-182 participates in substrate binding. Residues Lys-206, Asp-208, and Glu-209 each coordinate Mg(2+). An N6-carboxylysine modification is found at Lys-206. His-298 (proton acceptor) is an active-site residue. Positions 299, 331, and 383 each coordinate substrate.

This sequence belongs to the RuBisCO large chain family. Type I subfamily. Heterohexadecamer of 8 large chains and 8 small chains. The cofactor is Mg(2+).

The catalysed reaction is 2 (2R)-3-phosphoglycerate + 2 H(+) = D-ribulose 1,5-bisphosphate + CO2 + H2O. The enzyme catalyses D-ribulose 1,5-bisphosphate + O2 = 2-phosphoglycolate + (2R)-3-phosphoglycerate + 2 H(+). In terms of biological role, ruBisCO catalyzes two reactions: the carboxylation of D-ribulose 1,5-bisphosphate, the primary event in carbon dioxide fixation, as well as the oxidative fragmentation of the pentose substrate. Both reactions occur simultaneously and in competition at the same active site. This Xanthobacter autotrophicus (strain ATCC BAA-1158 / Py2) protein is Ribulose bisphosphate carboxylase large chain.